A 474-amino-acid polypeptide reads, in one-letter code: 6-phospho-beta-glucosidase AscB (474 aa).

Glu-180 acts as the Proton donor in catalysis. Catalysis depends on Glu-372, which acts as the Nucleophile.

Belongs to the glycosyl hydrolase 1 family.

It catalyses the reaction 6-phospho-beta-D-glucosyl-(1-&gt;4)-D-glucose + H2O = D-glucose 6-phosphate + D-glucose. Functionally, can hydrolyze salicin, cellobiose, and probably arbutin. The sequence is that of 6-phospho-beta-glucosidase AscB (ascB) from Escherichia coli (strain K12).